The following is a 166-amino-acid chain: Crossover junction endodeoxyribonuclease RuvC (166 aa).

Residues Asp11, Glu70, and Asp142 contribute to the active site. Mg(2+) contacts are provided by Asp11, Glu70, and Asp142.

Belongs to the RuvC family. Homodimer which binds Holliday junction (HJ) DNA. The HJ becomes 2-fold symmetrical on binding to RuvC with unstacked arms; it has a different conformation from HJ DNA in complex with RuvA. In the full resolvosome a probable DNA-RuvA(4)-RuvB(12)-RuvC(2) complex forms which resolves the HJ. Requires Mg(2+) as cofactor.

It localises to the cytoplasm. It carries out the reaction Endonucleolytic cleavage at a junction such as a reciprocal single-stranded crossover between two homologous DNA duplexes (Holliday junction).. Its function is as follows. The RuvA-RuvB-RuvC complex processes Holliday junction (HJ) DNA during genetic recombination and DNA repair. Endonuclease that resolves HJ intermediates. Cleaves cruciform DNA by making single-stranded nicks across the HJ at symmetrical positions within the homologous arms, yielding a 5'-phosphate and a 3'-hydroxyl group; requires a central core of homology in the junction. The consensus cleavage sequence is 5'-(A/T)TT(C/G)-3'. Cleavage occurs on the 3'-side of the TT dinucleotide at the point of strand exchange. HJ branch migration catalyzed by RuvA-RuvB allows RuvC to scan DNA until it finds its consensus sequence, where it cleaves and resolves the cruciform DNA. The chain is Crossover junction endodeoxyribonuclease RuvC from Nitratidesulfovibrio vulgaris (strain DP4) (Desulfovibrio vulgaris).